We begin with the raw amino-acid sequence, 223 residues long: Ion-translocating oxidoreductase complex subunit E (223 aa).

7 helical membrane-spanning segments follow: residues 17–37, 38–58, 68–88, 91–111, 124–144, 156–176, and 181–201; these read SLVQ…TINA, IGLG…ISIL, IPIY…LLHA, FNLY…CIVV, VISF…MFVI, FLFG…FTFI, and TIIL…VIAF.

The protein belongs to the NqrDE/RnfAE family. As to quaternary structure, the complex is composed of six subunits: RnfA, RnfB, RnfC, RnfD, RnfE and RnfG.

The protein resides in the cell inner membrane. Its function is as follows. Part of a membrane-bound complex that couples electron transfer with translocation of ions across the membrane. This Buchnera aphidicola subsp. Schizaphis graminum (strain Sg) protein is Ion-translocating oxidoreductase complex subunit E.